Here is a 416-residue protein sequence, read N- to C-terminus: MDASRPKSSESQSSLEAPRPGPNPSPNVVNKPLQRDSPGMVADRLPPKTGAVVIDMGTGTCKVGFAGQASPTYTVATILGCQPKKPATSGQSGLQTFIGEAARVLPELTLVQPLRSGIVVDWDAAELIWRHLLEHDLRVATHDHPLLFSDPPFSPATNREKLVEVAFESLRSPAMYVASQSVLSVYAHGRVSGLVVDTGHGVTYTVPVFQGYNLLHATERLDLAGNNLTAFLAEMLLQAGLPLGQQDLDLVENIKHHYCYVASDFQKEQARPEQEYKRTLKLPDGRTVTLGKELFQCPELLFNPPEVPGLSPVGLSTMAKQSLRKLSLEMRADLAQNVLLCGGSSLFTGFEGRFRAELLRALPAETHVVVAAQPTRNFSVWIGGSILASLRAFQSCWVLREQYEEQGPYIVYRKCY.

The disordered stretch occupies residues 1–40 (MDASRPKSSESQSSLEAPRPGPNPSPNVVNKPLQRDSPGM).

This sequence belongs to the actin family. Interacts with ACTL7A. As to expression, testis-specific.

Its subcellular location is the cytoplasmic vesicle. The protein localises to the secretory vesicle. It is found in the acrosome. It localises to the cytoplasm. The protein resides in the cytoskeleton. Its subcellular location is the perinuclear theca. Functionally, testis-specic protein that plays an important role in fusion of proacrosomal vesicles and perinuclear theca formation. This Homo sapiens (Human) protein is Actin-like protein 9.